The following is a 402-amino-acid chain: MAT+ sexual cell fertilization-promoting factor (402 aa).

The HMG box DNA-binding region spans 169–237 (IPRPPNAYIL…KLMSAHPHYR (69 aa)). The segment at 246–272 (IRRRAPRRNRAQEVANASPIGENSGAP) is disordered.

The protein resides in the nucleus. Controls fertilization, probably by determining the mating type. This is MAT+ sexual cell fertilization-promoting factor (FPR1) from Podospora anserina (Pleurage anserina).